A 309-amino-acid polypeptide reads, in one-letter code: Zinc-finger homeodomain protein 5 (309 aa).

Positions 1-16 are enriched in basic and acidic residues; the sequence is MDMRSHEMIERRREDN. The segment at 1–21 is disordered; that stretch reads MDMRSHEMIERRREDNGNNNG. Residues 76-125 form a ZF-HD dimerization-type; degenerate zinc finger; that stretch reads YRECLKNHAASVGGSVHDGCGEFMPSGEEGTIEALRCAACDCHRNFHRKE. Residues 240 to 303 constitute a DNA-binding region (homeobox); the sequence is KKRFRTKFTT…NNKNNAKKPP (64 aa).

In terms of assembly, homo- and heterodimer with other ZFHD proteins. Interacts with MIF1, MIF2 and MIF3; these interactions prevent nuclear localization and DNA-binding to inhibit transcription regulation activity. Binds to ZHD1, ZHD2, ZHD4, ZHD10 and ZHD11. Mostly expressed in flowers and inflorescence.

It is found in the nucleus. In terms of biological role, putative transcription factor. Binds DNA at 5'-ATTA-3' consensus promoter regions. Regulates floral architecture and leaf development. Regulators in the abscisic acid (ABA) signal pathway that confers sensitivity to ABA in an ARF2-dependent manner. This chain is Zinc-finger homeodomain protein 5 (ZHD5), found in Arabidopsis thaliana (Mouse-ear cress).